A 1637-amino-acid chain; its full sequence is Kinesin-like protein KIF21B (1637 aa).

The Kinesin motor domain occupies 8 to 370 (CVKVAVRIRP…LKYANRARNI (363 aa)). Position 87–94 (87–94 (GQTGAGKT)) interacts with ATP. 2 coiled-coil regions span residues 376–604 (VNQD…EEEG) and 631–824 (NFQA…ALRR). Residues 400–1099 (MEYKAGKRVI…LQALIYNVQQ (700 aa)) are interaction with TRIM3. A compositionally biased stretch (low complexity) spans 509-533 (ASARSPYSLGASPAAPAFGGSPASS). Disordered regions lie at residues 509–538 (ASARSPYSLGASPAAPAFGGSPASSMEDAS) and 552–628 (KKKE…PEEK). Positions 578-627 (NSEETDENEAEEEEEERDESGCEEEEGREDEDEDSGSEESLVDSDSDPEE) are enriched in acidic residues. A Phosphoserine modification is found at Ser-579. Thr-582 carries the phosphothreonine modification. Disordered stretches follow at residues 830–865 (SERVAGRAGLKPPMLDSGAEVSASTTSSEAESGARS) and 880–906 (FLGDHPAPTVNGTRPARKKFQKKGASQ). The span at 846-865 (SGAEVSASTTSSEAESGARS) shows a compositional bias: low complexity. Positions 928–1016 (MQRMTIVNLE…EETKEELDST (89 aa)) form a coiled coil. 3 positions are modified to phosphoserine: Ser-1149, Ser-1167, and Ser-1215. Over residues 1194–1217 (RTVSLPTRGSTFPRQSRATETSPL) the composition is skewed to polar residues. The tract at residues 1194-1251 (RTVSLPTRGSTFPRQSRATETSPLTRRKSYDRGQPIRSTDVGFTPPSSPPTRPRNDRN) is disordered. Thr-1237 bears the Phosphothreonine mark. At Ser-1241 the chain carries Phosphoserine. 7 WD repeats span residues 1306-1343 (GHTKPILCLDATDELLFTGSKDRSCKMWNLVTGQEIAA), 1346-1384 (GHPNNVVSIKYCSHSGLVFSVSTSYIKVWDIRDSAKCIR), 1410-1448 (QGEHQINQIALSPSGTMLYAASGNAVRIWELSRFQPVGK), 1451-1493 (GHIG…TGTI), 1502-1539 (PHYDGIECLAIQGDILFSGSRDNGIKKWDLDQQELIQQ), 1543-1582 (AHKDWVCALAFIPGRPMLLSACRAGVIKVWNVDNFTPIGE), and 1585-1622 (GHDSPINAICTNAKHIFTASSDCRVKLWNYVPGLTPCL).

It belongs to the TRAFAC class myosin-kinesin ATPase superfamily. Kinesin family. In terms of assembly, interacts with TRIM3; the interaction positively affects motility of KIF21B. Interacts with GABARAP and GABA(A) receptor subunits: GABRG2, GABRA1 and GABRA2. May interact with GABA(A) receptor subunits: GABRB2 and GABRB3.

Its subcellular location is the cytoplasm. It is found in the cytoskeleton. The protein localises to the cell projection. The protein resides in the dendrite. It localises to the growth cone. Its subcellular location is the axon. It is found in the cytoplasmic vesicle. Functionally, plus-end directed microtubule-dependent motor protein which displays processive activity. Is involved in regulation of microtubule dynamics, synapse function and neuronal morphology, including dendritic tree branching and spine formation. Plays a role in lerning and memory. Involved in delivery of gamma-aminobutyric acid (GABA(A)) receptor to cell surface. This is Kinesin-like protein KIF21B (KIF21B) from Homo sapiens (Human).